The primary structure comprises 157 residues: Phosphopantetheine adenylyltransferase (157 aa).

Residue Ser8 participates in substrate binding. ATP contacts are provided by residues 8-9 (SF) and His16. The substrate site is built by Lys40, Thr72, and Arg86. Residues 87–89 (GLR), Glu97, and 122–128 (HSFLSSS) each bind ATP.

Belongs to the bacterial CoaD family. As to quaternary structure, homohexamer. Mg(2+) is required as a cofactor.

Its subcellular location is the cytoplasm. It catalyses the reaction (R)-4'-phosphopantetheine + ATP + H(+) = 3'-dephospho-CoA + diphosphate. It participates in cofactor biosynthesis; coenzyme A biosynthesis; CoA from (R)-pantothenate: step 4/5. Reversibly transfers an adenylyl group from ATP to 4'-phosphopantetheine, yielding dephospho-CoA (dPCoA) and pyrophosphate. This chain is Phosphopantetheine adenylyltransferase, found in Prochlorococcus marinus (strain MIT 9303).